Consider the following 243-residue polypeptide: Large ribosomal subunit protein uL2 (243 aa).

Residues 202-243 (HGGGRHQHVGQSSTVSRNAPPGAKVGSIAARKTGRAKIKDRR) form a disordered region. Basic residues predominate over residues 233 to 243 (KTGRAKIKDRR).

This sequence belongs to the universal ribosomal protein uL2 family. Part of the 50S ribosomal subunit. Forms a bridge to the 30S subunit in the 70S ribosome.

Functionally, one of the primary rRNA binding proteins. Required for association of the 30S and 50S subunits to form the 70S ribosome, for tRNA binding and peptide bond formation. It has been suggested to have peptidyltransferase activity; this is somewhat controversial. Makes several contacts with the 16S rRNA in the 70S ribosome. This is Large ribosomal subunit protein uL2 from Cenarchaeum symbiosum (strain A).